Reading from the N-terminus, the 367-residue chain is Glutamate 5-kinase (367 aa).

Lysine 10 serves as a coordination point for ATP. Residues serine 50, aspartate 137, and asparagine 149 each coordinate substrate. Residues 169-170 (TD) and 211-217 (TGGMGTK) each bind ATP. The region spanning 275–353 (AGEITVDEGA…QQIDAILGYE (79 aa)) is the PUA domain.

The protein belongs to the glutamate 5-kinase family.

The protein localises to the cytoplasm. The catalysed reaction is L-glutamate + ATP = L-glutamyl 5-phosphate + ADP. It participates in amino-acid biosynthesis; L-proline biosynthesis; L-glutamate 5-semialdehyde from L-glutamate: step 1/2. Its function is as follows. Catalyzes the transfer of a phosphate group to glutamate to form L-glutamate 5-phosphate. The sequence is that of Glutamate 5-kinase from Citrobacter koseri (strain ATCC BAA-895 / CDC 4225-83 / SGSC4696).